We begin with the raw amino-acid sequence, 199 residues long: Neurotrophic factor BDNF precursor form (199 aa).

Residues 1-23 (GQGSLAYPGLRTQGNLETLSGPN) form a disordered region. The propeptide occupies 1 to 100 (GQGSLAYPGL…AANMSMRVRR (100 aa)). Residues 12–23 (TQGNLETLSGPN) show a composition bias toward polar residues. Residue asparagine 93 is glycosylated (N-linked (GlcNAc...) asparagine). A disulfide bridge links cysteine 113 with cysteine 180.

This sequence belongs to the NGF-beta family.

It localises to the secreted. Promotes the survival of neuronal populations that are all located either in the central nervous system or directly connected to it. The sequence is that of Neurotrophic factor BDNF precursor form (BDNF) from Eunectes notaeus (Yellow anaconda).